We begin with the raw amino-acid sequence, 274 residues long: Penicillin-insensitive murein endopeptidase (274 aa).

Residues 1–19 (MNKTAIALLALLASSASLA) form the signal peptide. 3 disulfides stabilise this stretch: Cys44/Cys265, Cys187/Cys235, and Cys216/Cys223. Zn(2+) is bound by residues His110, His113, Asp120, Asp147, His150, and His211. Residues 228-274 (LPPSGDGCGAELQSWFEPPKPGTTKPEKKTPPPLPPSCQALLDEHVI) form a disordered region.

The protein belongs to the peptidase M74 family. Dimer. Zn(2+) is required as a cofactor.

It localises to the periplasm. Its activity is regulated as follows. Inhibited by Zn(2+) at 10 mM and by metal chelating agents EDTA and 1,10-phenanthroline. Murein endopeptidase that cleaves the D-alanyl-meso-2,6-diamino-pimelyl amide bond that connects peptidoglycan strands. Likely plays a role in the removal of murein from the sacculus and could also play a role in the integration of nascent murein strands into the sacculus. The sequence is that of Penicillin-insensitive murein endopeptidase (mepA) from Escherichia coli (strain K12).